Consider the following 186-residue polypeptide: uncharacterized protein (186 aa).

This is an uncharacterized protein from Mycoplasma genitalium (strain ATCC 33530 / DSM 19775 / NCTC 10195 / G37) (Mycoplasmoides genitalium).